A 452-amino-acid polypeptide reads, in one-letter code: MMITLRKLPLAVAVAAGVMSAQAMAVDFHGYARSGIGWTGSGGEQQCFQVTGAQSKYRLGNECETYAELKLGQEVWKEGDKSFYFDTNVAYSVNQQNDWESTDPAFREANVQGKNLIEWLPGSTIWAGKRFYQRHDVHMIDFYYWDISGPGAGIENIDLGFGKLSLAATRSTEAGGSYTFSSQNIYDEVKDTANDVFDVRLAGLQTNPDGVLELGVDYGRANTTDGYKLADGASKDGWMFTAEHTQSMLKGYNKFVVQYATDAMTTQGKGQARGSDGSSSFTEELPDGTKINYANKVINNNGNMWRILDHGAISLGDKWDLMYVGMYQNIDWDNNLGTEWWTVGVRPMYKWTPIMSTLLEVGYDNVKSQQTGDRNNQYKITLAQQWQAGDSIWSRPAIRIFATYAKWDEKWGYIKDGDNISRYAAATNSGISTNSRGDSDEWTFGAQMEIWW.

The signal sequence occupies residues 1–25 (MMITLRKLPLAVAVAAGVMSAQAMA).

This sequence belongs to the porin LamB (TC 1.B.3) family. Homotrimer formed of three 18-stranded antiparallel beta-barrels, containing three independent channels.

It is found in the cell outer membrane. It carries out the reaction beta-maltose(in) = beta-maltose(out). Functionally, involved in the transport of maltose and maltodextrins. The polypeptide is Maltoporin (Salmonella heidelberg (strain SL476)).